The sequence spans 254 residues: Type III pantothenate kinase (254 aa).

Position 13-20 (13-20 (MIGNTRQH)) interacts with ATP. Substrate-binding positions include Tyr-84 and 88–91 (GLDR). Residue Asp-90 is the Proton acceptor of the active site. Asp-110 contributes to the K(+) binding site. Thr-113 serves as a coordination point for ATP. Residue Thr-166 participates in substrate binding.

Belongs to the type III pantothenate kinase family. As to quaternary structure, homodimer. It depends on NH4(+) as a cofactor. K(+) is required as a cofactor.

Its subcellular location is the cytoplasm. It carries out the reaction (R)-pantothenate + ATP = (R)-4'-phosphopantothenate + ADP + H(+). Its pathway is cofactor biosynthesis; coenzyme A biosynthesis; CoA from (R)-pantothenate: step 1/5. In terms of biological role, catalyzes the phosphorylation of pantothenate (Pan), the first step in CoA biosynthesis. The sequence is that of Type III pantothenate kinase from Thermosynechococcus vestitus (strain NIES-2133 / IAM M-273 / BP-1).